The sequence spans 200 residues: Recoverin (200 aa).

A lipid anchor (N-myristoyl glycine) is attached at G2. EF-hand domains follow at residues 25–60 (EEEL…FPDT), 61–96 (DPKA…TTAG), 97–132 (KTNQ…IFKM), and 147–182 (TPEK…NKEI). Cysteine sulfenic acid (-SOH) is present on C39. 10 residues coordinate Ca(2+): D74, N76, D78, T80, E85, D110, D112, N114, T116, and E121. An interaction with GRK1 region spans residues 189–192 (EPQK).

The protein belongs to the recoverin family. As to quaternary structure, homodimer; disulfide-linked. Homodimerization is caused by prolonged intense illumination. May form a complex composed of RHO, GRK1 and RCVRN in a Ca(2+)-dependent manner; RCVRN prevents the interaction between GRK1 and RHO. Interacts (via C-terminus) with GRK1 (via N-terminus); the interaction is Ca(2+)-dependent. The N-terminal glycine is linked to one of four different types of acyl groups. The most abundant is myristoleate (14:1), but 14:0, 14:2, and 12:0 acyl residues are also present. The Ca(2+) induced exposure of the myristoyl group, known as the calcium-myristoyl switch, promotes RCVRN binding to the photoreceptor cell membranes only when intracellular Ca(2+) concentration is high. In terms of processing, oxidation on Cys-39 occurs in response to prolonged intense illumination and results in the formation of disulfide homodimers, and to a lesser extent disulfide-linked heterodimers. As to expression, retina and pineal gland.

It is found in the photoreceptor inner segment. The protein localises to the cell projection. Its subcellular location is the cilium. The protein resides in the photoreceptor outer segment. It localises to the photoreceptor outer segment membrane. It is found in the perikaryon. In terms of biological role, acts as a calcium sensor and regulates phototransduction of cone and rod photoreceptor cells. Modulates light sensitivity of cone photoreceptor in dark and dim conditions. In response to high Ca(2+) levels induced by low light levels, prolongs RHO/rhodopsin activation in rod photoreceptor cells by binding to and inhibiting GRK1-mediated phosphorylation of RHO/rhodopsin. Plays a role in scotopic vision/enhances vision in dim light by enhancing signal transfer between rod photoreceptors and rod bipolar cells. Improves rod photoreceptor sensitivity in dim light and mediates response of rod photoreceptors to facilitate detection of change and motion in bright light. This is Recoverin (RCVRN) from Homo sapiens (Human).